Here is a 270-residue protein sequence, read N- to C-terminus: NAD(P)H-hydrate epimerase (270 aa).

Positions phenylalanine 25–glutamine 234 constitute a YjeF N-terminal domain. Aspartate 73–glutamine 77 contacts (6S)-NADPHX. The K(+) site is built by asparagine 74 and aspartate 144. Residues glycine 148–histidine 154 and glutamate 177 contribute to the (6S)-NADPHX site. K(+) is bound at residue threonine 180.

Belongs to the NnrE/AIBP family. The cofactor is K(+).

It carries out the reaction (6R)-NADHX = (6S)-NADHX. It catalyses the reaction (6R)-NADPHX = (6S)-NADPHX. Catalyzes the epimerization of the S- and R-forms of NAD(P)HX, a damaged form of NAD(P)H that is a result of enzymatic or heat-dependent hydration. This is a prerequisite for the S-specific NAD(P)H-hydrate dehydratase to allow the repair of both epimers of NAD(P)HX. This is NAD(P)H-hydrate epimerase from Legionella pneumophila subsp. pneumophila (strain Philadelphia 1 / ATCC 33152 / DSM 7513).